The chain runs to 504 residues: Pre-mRNA-processing factor 19 (504 aa).

An N-acetylserine modification is found at Ser2. The 72-residue stretch at 2-73 folds into the U-box domain; sequence SLICSISNEV…KPPSATSIPA (72 aa). The may mediate interaction with PSMC5 stretch occupies residues 68 to 223; the sequence is ATSIPAILKA…VGLHSASIPG (156 aa). N6-acetyllysine occurs at positions 122, 179, 244, and 261. A WD 1 repeat occupies 219–259; sequence ASIPGILALDLCPSDTNKILTGGADKNVVVFDKSTEQILAT. WD repeat units lie at residues 262–301, 304–345, 348–387, 390–429, 433–472, and 473–503; these read GHTKKVTSVVFHPSQELVFSASPDATIRIWSVPNTSCVQV, AHES…TKVT, TSGCSLTCAQFHPDGLIFGTGTMDSQIKIWDLKERTNVAN, GHSGPITSIAFSENGYYLATAADDSSVKLWDLRKLKNFKT, DNNFEVKSLIFDQSGTYLALGGTDVQIYICKQWTEILHFT, and EHSGLTTGVAFGHHAKFIASTGMDRSLKFYS.

Belongs to the WD repeat PRP19 family. As to quaternary structure, homotetramer. Component of activated, catalytic and post-catalytic spliceosomes. Component of the Prp19 complex/PRP19C/Nineteen complex/NTC and related complexes described as PRP19-CDC5L splicing complex and PSO4 complex. A homotetramer of PRPF19, CDC5L, PLRG1 and BCAS2 constitute the core of those complexes. The interaction with CDC5L, PLRG1 and BCAS2 is direct within this core complex. At least three less stably associated proteins CTNNBL1, CWC15 and HSPA8 are found in the Prp19 complex. The Prp19 complex associates with the spliceosome during its assembly and remodeling recruiting additional proteins. Component of the XAB2 complex, a multimeric protein complex composed of XAB2, PRPF19, AQR, ZNF830, ISY1, and PPIE. Interacts with CWC22 and EIF4A3 in an RNA-independent manner. Interacts with RPA1 and RPA2; the PRP19-CDC5L complex is recruited to the sites of DNA repair where it interacts with the replication protein A complex (RPA). Interacts with SETMAR; required for SETMAR recruitment to site of DNA damage. Interacts with U2AF2; the interaction is direct and recruits the Prp19 complex to RNA polymerase II C-terminal domain (CTD) and the pre-mRNA. Interacts with PRPF3. Interacts with APEX1, DNTT and PSMB4. Interacts with KNSTRN. Interacts with PSMC5. Isoform 2 (via N-terminus) interacts with PPIA. Isoform 2 does not interact with CDC5L. Interacts with KHDC4. Interacts with USB1. Interacts with DDX41. Expressed in white and brown adipose tissues, brain and to a lower extent in liver, kidney, muscle, lung and spleen (at protein level).

It is found in the nucleus. Its subcellular location is the nucleoplasm. It localises to the cytoplasm. The protein localises to the cytoskeleton. The protein resides in the spindle. It is found in the lipid droplet. The catalysed reaction is S-ubiquitinyl-[E2 ubiquitin-conjugating enzyme]-L-cysteine + [acceptor protein]-L-lysine = [E2 ubiquitin-conjugating enzyme]-L-cysteine + N(6)-ubiquitinyl-[acceptor protein]-L-lysine.. It functions in the pathway protein modification; protein ubiquitination. Functionally, ubiquitin-protein ligase which is a core component of several complexes mainly involved in pre-mRNA splicing and DNA repair. Required for pre-mRNA splicing as component of the spliceosome. Core component of the PRP19C/Prp19 complex/NTC/Nineteen complex which is part of the spliceosome and participates in its assembly, its remodeling and is required for its activity. During assembly of the spliceosome, mediates 'Lys-63'-linked polyubiquitination of the U4 spliceosomal protein PRPF3. Ubiquitination of PRPF3 allows its recognition by the U5 component PRPF8 and stabilizes the U4/U5/U6 tri-snRNP spliceosomal complex. Recruited to RNA polymerase II C-terminal domain (CTD) and the pre-mRNA, it may also couple the transcriptional and spliceosomal machineries. The XAB2 complex, which contains PRPF19, is also involved in pre-mRNA splicing, transcription and transcription-coupled repair. Beside its role in pre-mRNA splicing PRPF19, as part of the PRP19-CDC5L complex, plays a role in the DNA damage response/DDR. It is recruited to the sites of DNA damage by the RPA complex where PRPF19 directly ubiquitinates RPA1 and RPA2. 'Lys-63'-linked polyubiquitination of the RPA complex allows the recruitment of the ATR-ATRIP complex and the activation of ATR, a master regulator of the DNA damage response. May also play a role in DNA double-strand break (DSB) repair by recruiting the repair factor SETMAR to altered DNA. As part of the PSO4 complex may also be involved in the DNA interstrand cross-links/ICLs repair process. In addition, may also mediate 'Lys-48'-linked polyubiquitination of substrates and play a role in proteasomal degradation. May play a role in the biogenesis of lipid droplets. May play a role in neural differentiation possibly through its function as part of the spliceosome. Its function is as follows. Forced expression leads to suppression of neuronal differentiation, and on the contrary to stimulation of astroglial cell differentiation in retinoic acid-primed P19 cells. The protein is Pre-mRNA-processing factor 19 of Mus musculus (Mouse).